Here is a 327-residue protein sequence, read N- to C-terminus: Phenylalanine--tRNA ligase alpha subunit (327 aa).

Mg(2+) is bound at residue Glu-252.

This sequence belongs to the class-II aminoacyl-tRNA synthetase family. Phe-tRNA synthetase alpha subunit type 1 subfamily. Tetramer of two alpha and two beta subunits. Mg(2+) is required as a cofactor.

Its subcellular location is the cytoplasm. It catalyses the reaction tRNA(Phe) + L-phenylalanine + ATP = L-phenylalanyl-tRNA(Phe) + AMP + diphosphate + H(+). The sequence is that of Phenylalanine--tRNA ligase alpha subunit from Haemophilus ducreyi (strain 35000HP / ATCC 700724).